Here is a 141-residue protein sequence, read N- to C-terminus: 6,7-dimethyl-8-ribityllumazine synthase (141 aa).

5-amino-6-(D-ribitylamino)uracil-binding positions include F14, 46–48 (VFD), and 70–72 (CVI). 75–76 (ET) provides a ligand contact to (2S)-2-hydroxy-3-oxobutyl phosphate. H78 acts as the Proton donor in catalysis. L103 serves as a coordination point for 5-amino-6-(D-ribitylamino)uracil. R118 contributes to the (2S)-2-hydroxy-3-oxobutyl phosphate binding site.

As to quaternary structure, forms an icosahedral capsid composed of 60 subunits, arranged as a dodecamer of pentamers.

The enzyme catalyses (2S)-2-hydroxy-3-oxobutyl phosphate + 5-amino-6-(D-ribitylamino)uracil = 6,7-dimethyl-8-(1-D-ribityl)lumazine + phosphate + 2 H2O + H(+). It functions in the pathway cofactor biosynthesis; riboflavin biosynthesis; riboflavin from 2-hydroxy-3-oxobutyl phosphate and 5-amino-6-(D-ribitylamino)uracil: step 1/2. In terms of biological role, catalyzes the formation of 6,7-dimethyl-8-ribityllumazine by condensation of 5-amino-6-(D-ribitylamino)uracil with 3,4-dihydroxy-2-butanone 4-phosphate. This is the penultimate step in the biosynthesis of riboflavin. This chain is 6,7-dimethyl-8-ribityllumazine synthase (ribH), found in Methanocaldococcus jannaschii (strain ATCC 43067 / DSM 2661 / JAL-1 / JCM 10045 / NBRC 100440) (Methanococcus jannaschii).